The following is an 814-amino-acid chain: G-type lectin S-receptor-like serine/threonine-protein kinase At1g61400 (814 aa).

Residues 1–34 (MDFLFLLLERKNKHMGKKRVVLLWLSIFISFSSA) form the signal peptide. The Bulb-type lectin domain maps to 35–154 (EITEESPLSI…VSGRTLWESF (120 aa)). Topologically, residues 35–436 (EITEESPLSI…ELDVNKRKKT (402 aa)) are extracellular. Residues N63, N104, N127, and N246 are each glycosylated (N-linked (GlcNAc...) asparagine). The EGF-like; atypical domain maps to 288–324 (PANSCDIYGVCGPFGFCVISVPPKCKCFKGFIPKSIE). 2 disulfides stabilise this stretch: C292/C304 and C298/C312. 3 N-linked (GlcNAc...) asparagine glycosylation sites follow: N330, N346, and N385. Residues 343–425 (CQGNSTGKDA…GELLSIRLAR (83 aa)) enclose the PAN domain. 2 disulfides stabilise this stretch: C378/C399 and C382/C388. The chain crosses the membrane as a helical span at residues 437–457 (IIAITVSLTLFVILGFTAFGF). Residues 458 to 814 (WRRRVEQNAL…EMTESVIHGR (357 aa)) are Cytoplasmic-facing. The 286-residue stretch at 500 to 785 (FSLSNKLGHG…DLPLPKQPTF (286 aa)) folds into the Protein kinase domain. ATP-binding positions include 506–514 (LGHGGFGSV) and K528. Phosphoserine occurs at positions 534 and 549. Positions 589-606 (KKRLEIDWPKRFDIIQGI) are caM-binding. The active-site Proton acceptor is the D625. A phosphoserine mark is found at S629 and S642. The residue at position 659 (T659) is a Phosphothreonine. Phosphoserine is present on residues S702 and S796.

It belongs to the protein kinase superfamily. Ser/Thr protein kinase family.

It localises to the cell membrane. The enzyme catalyses L-seryl-[protein] + ATP = O-phospho-L-seryl-[protein] + ADP + H(+). It catalyses the reaction L-threonyl-[protein] + ATP = O-phospho-L-threonyl-[protein] + ADP + H(+). The protein is G-type lectin S-receptor-like serine/threonine-protein kinase At1g61400 of Arabidopsis thaliana (Mouse-ear cress).